Reading from the N-terminus, the 214-residue chain is EEF1A lysine methyltransferase 1 (214 aa).

The residue at position 2 (Ser2) is an N-acetylserine. Position 2 is a phosphoserine (Ser2).

Belongs to the class I-like SAM-binding methyltransferase superfamily. EFM5 family.

It localises to the cytoplasm. It carries out the reaction L-lysyl-[protein] + 3 S-adenosyl-L-methionine = N(6),N(6),N(6)-trimethyl-L-lysyl-[protein] + 3 S-adenosyl-L-homocysteine + 3 H(+). In terms of biological role, protein-lysine methyltransferase that selectively catalyzes the trimethylation of EEF1A at 'Lys-79'. The protein is EEF1A lysine methyltransferase 1 of Mus musculus (Mouse).